A 132-amino-acid chain; its full sequence is Small ribosomal subunit protein uS8 (132 aa).

The protein belongs to the universal ribosomal protein uS8 family. As to quaternary structure, part of the 30S ribosomal subunit. Contacts proteins S5 and S12.

Its function is as follows. One of the primary rRNA binding proteins, it binds directly to 16S rRNA central domain where it helps coordinate assembly of the platform of the 30S subunit. This chain is Small ribosomal subunit protein uS8, found in Gluconacetobacter diazotrophicus (strain ATCC 49037 / DSM 5601 / CCUG 37298 / CIP 103539 / LMG 7603 / PAl5).